We begin with the raw amino-acid sequence, 163 residues long: MTKIGGILVCLVIVGLDVAAAILGIQAEVAQNQVKHMRLWLFECREPSQDAFRLGLGAAAILVMAHVLLNLVGGCLCICSQDEFQRSSSTRQISMACLVLTWIVFAVGFGSIVIGTMSNSKSRSSCGFTHHHFLSIGGILCFLHALFCVAYYVSATAAKDEAK.

The signal sequence occupies residues 1–27 (MTKIGGILVCLVIVGLDVAAAILGIQA). 3 helical membrane-spanning segments follow: residues 54 to 74 (LGLG…LVGG), 95 to 115 (MACL…IVIG), and 133 to 153 (FLSI…AYYV).

The protein belongs to the DESIGUAL family. As to quaternary structure, interacts with OPS. As to expression, expressed in vascular cells, mostly in hypocotyls, and, to a lower extent, in seedlings, roots, flowers, siliques, developing leaves and inflorescences, but barely in mature leaves and seeds. High levels in leaf primordia.

Its subcellular location is the endoplasmic reticulum membrane. Functionally, required, together with OPS, for embryo provasculature development and cotyledon vascular complexity and connectivity. Necessary, partially redundantly with DEAL2 and DEAL3, to ensure bilateral symmetry development and early leaf margin patterning, probably via the regulation of auxin and CUC2 distribution. Regulates cell proliferation but not cell expansion. This Arabidopsis thaliana (Mouse-ear cress) protein is Protein VASCULATURE COMPLEXITY AND CONNECTIVITY.